Reading from the N-terminus, the 1002-residue chain is Copper-transporting ATPase HMA5 (1002 aa).

The segment covering 32-48 (RPRYPSMPRRPRSAAVA) has biased composition (low complexity). The segment at 32–63 (RPRYPSMPRRPRSAAVAGEGGEGGGGGGDGDL) is disordered. The span at 49 to 60 (GEGGEGGGGGGD) shows a compositional bias: gly residues. HMA domains are found at residues 75-141 (KVAV…FEAK), 153-219 (LVCR…FEAI), and 228-294 (SRID…SGDL). The Cu(+) site is built by C86, C89, C164, and C167. 8 helical membrane-spanning segments follow: residues 320–340 (FLWS…FMYI), 354–374 (MMSI…FVIG), 392–412 (MDVL…YSIL), 425–445 (FFET…LEIL), 585–605 (VFVP…FLAG), 624–644 (LALQ…LGLA), 943–963 (YVWA…VLFP), and 972–992 (WVAG…SLLL).

This sequence belongs to the cation transport ATPase (P-type) (TC 3.A.3) family. Type IB subfamily. Expressed in root pericycle cells, xylem region of diffuse vascular bundles in the first node, and vascular tissues of peduncle, rachis and husk.

Its subcellular location is the cell membrane. The catalysed reaction is Cu(+)(in) + ATP + H2O = Cu(+)(out) + ADP + phosphate + H(+). Its function is as follows. Copper (Cu) transporter that plays an essential role in promoting translocation of Cu from roots to shoots. Involved in loading Cu to the xylem of the roots and other organs, including panicles. This is Copper-transporting ATPase HMA5 from Oryza sativa subsp. japonica (Rice).